A 264-amino-acid polypeptide reads, in one-letter code: ECF RNA polymerase sigma factor BldN (264 aa).

The tract at residues 1-87 (MYPHVGVDAS…PAADSDSARM (87 aa)) is not required for transcription in vitro. The segment at 64 to 83 (RSSSSGAAATTHRRPAADSD) is disordered. Residues 105–172 (LYDQYSDTVY…LVADHFKSSR (68 aa)) form a sigma-70 factor domain-2 region. The Polymerase core binding signature appears at 129 to 132 (DLTS). Residues 204-255 (ALLDAVRRLNPQQQECVTLRFLQGLSVAETARVMGKNEGAIKTLQYRAVRTL) are sigma-70 factor domain-4.

The protein belongs to the sigma-70 factor family. ECF subfamily. Post-translationally, two forms of protein exist; a 35 kDa form in early growth and a 28 kDa form seen in later stages (at protein level). In liquid culture the larger form accumulates to higher level than on solid media. The shorter form results from processing just upstream of Met-87; the exact position is unknown. There are 4 possible start codons; mutation of the first prevents protein production while mutation of the other 3 (Val-44, Met-87 and Met-88) permits production of both forms. Introduction of stop codons between the first and second, or second and third possible start codons also prevents protein production, corroborating that the annotated start codon is the correct one.

Functionally, sigma factors are initiation factors that promote the attachment of RNA polymerase to specific initiation sites and are then released. Extracytoplasmic function (ECF) sigma factors are usually held in an inactive form by an anti-sigma factor until released. ECF sigma factor involved in aerial mycelium formation, required for translation from the bldMp1 promoter. Expressed as a preprotein; processing and accumulation of the mature protein starts as aerial mycelium formation and sporulation commence. Activates expression of about 17 genes, including those for rdlA and most of the chaplins (chpA to chpH); chaplin activation is indirect. The sequence is that of ECF RNA polymerase sigma factor BldN from Streptomyces coelicolor (strain ATCC BAA-471 / A3(2) / M145).